A 262-amino-acid polypeptide reads, in one-letter code: Small ribosomal subunit protein uS2 (262 aa).

Positions 228–262 are disordered; that stretch reads VSNEEVAAEQNIDLDESKEATEAETTEENTSVESN.

It belongs to the universal ribosomal protein uS2 family.

This is Small ribosomal subunit protein uS2 from Staphylococcus saprophyticus subsp. saprophyticus (strain ATCC 15305 / DSM 20229 / NCIMB 8711 / NCTC 7292 / S-41).